The primary structure comprises 343 residues: Flap endonuclease 1 (343 aa).

Positions methionine 1–arginine 98 are N-domain. Mg(2+) is bound by residues aspartate 27, aspartate 80, glutamate 152, glutamate 154, aspartate 173, aspartate 175, and aspartate 236. Residues glutamate 116–arginine 258 form an I-domain region. The interval arginine 330–phenylalanine 338 is interaction with PCNA.

Belongs to the XPG/RAD2 endonuclease family. FEN1 subfamily. As to quaternary structure, interacts with PCNA. PCNA stimulates the nuclease activity without altering cleavage specificity. Mg(2+) is required as a cofactor.

Its function is as follows. Structure-specific nuclease with 5'-flap endonuclease and 5'-3' exonuclease activities involved in DNA replication and repair. During DNA replication, cleaves the 5'-overhanging flap structure that is generated by displacement synthesis when DNA polymerase encounters the 5'-end of a downstream Okazaki fragment. Binds the unpaired 3'-DNA end and kinks the DNA to facilitate 5' cleavage specificity. Cleaves one nucleotide into the double-stranded DNA from the junction in flap DNA, leaving a nick for ligation. Also involved in the base excision repair (BER) pathway. Acts as a genome stabilization factor that prevents flaps from equilibrating into structures that lead to duplications and deletions. Also possesses 5'-3' exonuclease activity on nicked or gapped double-stranded DNA. This Pyrococcus horikoshii (strain ATCC 700860 / DSM 12428 / JCM 9974 / NBRC 100139 / OT-3) protein is Flap endonuclease 1.